We begin with the raw amino-acid sequence, 129 residues long: Glycine cleavage system H protein (129 aa).

One can recognise a Lipoyl-binding domain in the interval 24–106 (LVRVGISAFA…HGEGWLLVVR (83 aa)). Residue Lys65 is modified to N6-lipoyllysine.

Belongs to the GcvH family. As to quaternary structure, the glycine cleavage system is composed of four proteins: P, T, L and H. It depends on (R)-lipoate as a cofactor.

In terms of biological role, the glycine cleavage system catalyzes the degradation of glycine. The H protein shuttles the methylamine group of glycine from the P protein to the T protein. This Prochlorococcus marinus (strain MIT 9303) protein is Glycine cleavage system H protein.